Here is a 100-residue protein sequence, read N- to C-terminus: Large ribosomal subunit protein uL23 (100 aa).

The protein belongs to the universal ribosomal protein uL23 family. As to quaternary structure, part of the 50S ribosomal subunit. Contacts protein L29, and trigger factor when it is bound to the ribosome.

In terms of biological role, one of the early assembly proteins it binds 23S rRNA. One of the proteins that surrounds the polypeptide exit tunnel on the outside of the ribosome. Forms the main docking site for trigger factor binding to the ribosome. This Aeromonas hydrophila subsp. hydrophila (strain ATCC 7966 / DSM 30187 / BCRC 13018 / CCUG 14551 / JCM 1027 / KCTC 2358 / NCIMB 9240 / NCTC 8049) protein is Large ribosomal subunit protein uL23.